Consider the following 326-residue polypeptide: MKNIAIIGASGYTGAQITSLIHADAGLSVQGLYVSENSLDKGRELSELYPLYSHLPYVLNPLSDDVKAKIVAESDAVVLATEHSVSLELAAWFYQQGLAVFDLSGAYRFADVAQYPKWYGFEHTHPDVLAEAVYGLAEWNAAEIAKTRMIAVPGCYPTASLTALKPLKSLLTSAYPVINAVSGVTGAGRKAHLHTSFCEVSLTPYGVLGHRHQPEIATQLGQEVIFTPHLGNFKRGILATITVQLQPGTTEEQVKQAYEVYDNSPLVTVKHNAFPKVDDVVHTPNCHLGWKYDANSGYLVVASAIDNLMKGAASQGLQCIKIHFNL.

C155 is a catalytic residue.

It belongs to the NAGSA dehydrogenase family. Type 1 subfamily.

The protein resides in the cytoplasm. The catalysed reaction is N-acetyl-L-glutamate 5-semialdehyde + phosphate + NADP(+) = N-acetyl-L-glutamyl 5-phosphate + NADPH + H(+). It participates in amino-acid biosynthesis; L-arginine biosynthesis; N(2)-acetyl-L-ornithine from L-glutamate: step 3/4. In terms of biological role, catalyzes the NADPH-dependent reduction of N-acetyl-5-glutamyl phosphate to yield N-acetyl-L-glutamate 5-semialdehyde. In Shewanella denitrificans (strain OS217 / ATCC BAA-1090 / DSM 15013), this protein is N-acetyl-gamma-glutamyl-phosphate reductase.